The primary structure comprises 170 residues: ATP synthase subunit b (170 aa).

The helical transmembrane segment at 30–50 (FFFVLAIFLVVLGVIGTFVVP) threads the bilayer.

It belongs to the ATPase B chain family. F-type ATPases have 2 components, F(1) - the catalytic core - and F(0) - the membrane proton channel. F(1) has five subunits: alpha(3), beta(3), gamma(1), delta(1), epsilon(1). F(0) has three main subunits: a(1), b(2) and c(10-14). The alpha and beta chains form an alternating ring which encloses part of the gamma chain. F(1) is attached to F(0) by a central stalk formed by the gamma and epsilon chains, while a peripheral stalk is formed by the delta and b chains.

The protein localises to the cell membrane. F(1)F(0) ATP synthase produces ATP from ADP in the presence of a proton or sodium gradient. F-type ATPases consist of two structural domains, F(1) containing the extramembraneous catalytic core and F(0) containing the membrane proton channel, linked together by a central stalk and a peripheral stalk. During catalysis, ATP synthesis in the catalytic domain of F(1) is coupled via a rotary mechanism of the central stalk subunits to proton translocation. In terms of biological role, component of the F(0) channel, it forms part of the peripheral stalk, linking F(1) to F(0). This is ATP synthase subunit b from Mycobacterium leprae (strain TN).